We begin with the raw amino-acid sequence, 502 residues long: MSENKDKNNILKRHIEEDNNIDNGKRKKLELGKDMEDVHDIASKEMEEHETTPIISQNLYLDTINRKLLDFDFEKVCSVSLTNLSVYACLVCGRYFQGRGPSSHAYFHALTENHHVFVNCSTLKFYVLPESYQVESSALQDIAYVMRPTFTKLEVQRLDHTPQLSYDLMLKPYVPGFVGMNNIKNNDYFNVVIHMLAHVKPFRNYFLLKNFDNCPQLVQRLAILIRKLWNHKAFKSHVSPQELIQEVTVLSHKKYSINEQKDPVEFLSWFLNTLHNCLGGKKSTIAKPTSIVHYSFQGFVRIESQKIRQHAEKGEQVVFTGDRVIQTNVVPFLYLTLDLPPKPIFQDEFEGNIIPQVELKEILNKYNGVHTQELAGMRRRFHLMTAPPYFIFHIKRFMKNNYFTERNQTIVTFPLDDFDMSPFIDDSFIQSNPKISTKYNLVANIIHESVTHAEEEFHNFRIQIRNPSTNKWYQIQDLYVEEISSDMIRLGESFIQLWERSS.

Residues 56 to 153 (SQNLYLDTIN…YVMRPTFTKL (98 aa)) form a UBP-type; degenerate zinc finger. 4 residues coordinate Zn(2+): Cys-89, Cys-92, His-108, and His-114. One can recognise a USP domain in the interval 178 to 501 (VGMNNIKNND…ESFIQLWERS (324 aa)).

This sequence belongs to the peptidase C19 family.

Its subcellular location is the nucleus. Functionally, may play a role in mRNA splicing. It is unsure if the protein really exhibits hydrolase activity. Could be a competitor of ubiquitin C-terminal hydrolases (UCHs). This Schizosaccharomyces pombe (strain 972 / ATCC 24843) (Fission yeast) protein is Probable mRNA-splicing protein ubp10 (ubp10).